A 308-amino-acid polypeptide reads, in one-letter code: Quinolinate synthase (308 aa).

Positions 24 and 41 each coordinate iminosuccinate. Residue Cys-86 participates in [4Fe-4S] cluster binding. Iminosuccinate-binding positions include 112–114 and Ser-129; that span reads YIN. Cys-172 contacts [4Fe-4S] cluster. Residues 198-200 and Thr-215 contribute to the iminosuccinate site; that span reads HPE. Cys-265 is a [4Fe-4S] cluster binding site.

It belongs to the quinolinate synthase family. Type 2 subfamily. Requires [4Fe-4S] cluster as cofactor.

The protein localises to the cytoplasm. The catalysed reaction is iminosuccinate + dihydroxyacetone phosphate = quinolinate + phosphate + 2 H2O + H(+). The protein operates within cofactor biosynthesis; NAD(+) biosynthesis; quinolinate from iminoaspartate: step 1/1. Its function is as follows. Catalyzes the condensation of iminoaspartate with dihydroxyacetone phosphate to form quinolinate. This Sulfurihydrogenibium sp. (strain YO3AOP1) protein is Quinolinate synthase.